A 113-amino-acid chain; its full sequence is MNTVRVTFLLVFVLAVSLGQADKDENRMEMQEKTEQGKSYLDFAENLLLQKLEELEAKLLEEDSEESRNSRQKRCIGEGVPCDENDPRCCSGLVCLKPTLHGIWYKSHYCYKK.

Positions 1 to 21 (MNTVRVTFLLVFVLAVSLGQA) are cleaved as a signal peptide. Positions 22 to 74 (DKDENRMEMQEKTEQGKSYLDFAENLLLQKLEELEAKLLEEDSEESRNSRQKR) are excised as a propeptide. Residues 60-69 (LEEDSEESRN) are compositionally biased toward basic and acidic residues. The interval 60-83 (LEEDSEESRNSRQKRCIGEGVPCD) is disordered. Disulfide bonds link C75–C90, C82–C95, and C89–C110.

This sequence belongs to the neurotoxin 14 (magi-1) family. 01 (HNTX-16) subfamily. In terms of tissue distribution, expressed by the venom gland.

The protein resides in the secreted. In terms of biological role, probable ion channel inhibitor. This Cyriopagopus hainanus (Chinese bird spider) protein is U11-theraphotoxin-Hhn1j.